Consider the following 129-residue polypeptide: MRSSSPSQPPSIKRAHRQAKKRAIRRRRVDLQCGCSIYFHLGCAGHGFTHRGTHHCTSGGEWRVYLGARKSPLFQDTQSRGPTVYQNEGIPRTDTVQPQPEESVASPQSLPELPSLDDVDDSFWINLFS.

The segment at 1-20 (MRSSSPSQPPSIKRAHRQAK) is disordered. A Nuclear localization signal motif is present at residues 13–28 (KRAHRQAKKRAIRRRR). Residues 33-50 (CGCSIYFHLGCAGHGFTH) fold into a zinc finger. The segment at 73-118 (LFQDTQSRGPTVYQNEGIPRTDTVQPQPEESVASPQSLPELPSLDD) is disordered. 2 stretches are compositionally biased toward polar residues: residues 74–86 (FQDT…TVYQ) and 94–109 (DTVQ…SPQS). A Phosphoserine; by host modification is found at Ser-109. Residues 115-129 (SLDDVDDSFWINLFS) are transactivation.

It belongs to the geminiviridae transcriptional activator protein family. As to quaternary structure, monomer. Homodimer. Homooligomer. Self-interaction correlates with nuclear localization and efficient activation of transcription. Monomers suppress local silencing by interacting with and inactivating host adenosine kinase 2 (ADK2) in the cytoplasm. Interacts with and inhibits host SNF1 kinase. In terms of processing, phosphorylated at Ser-109 by A.thaliana KIN10.

The protein localises to the host nucleus. The protein resides in the host cytoplasm. Functionally, strong activator of the late viral genes promoters. Enhances the expression of the capsid protein and nuclear shuttle protein. Acts as a suppressor of RNA-mediated gene silencing, also known as post-transcriptional gene silencing (PTGS), a mechanism of plant viral defense that limits the accumulation of viral RNAs. Suppresses the host RNA silencing by inhibiting adenosine kinase 2 (ADK2), a kinase involved in a general methylation pathway. Also suppresses the host basal defense by interacting with and inhibiting SNF1 kinase, a key regulator of cell metabolism implicated in innate antiviral defense. Determines pathogenicity. This chain is Transcriptional activator protein, found in Nicotiana tabacum (Common tobacco).